The chain runs to 155 residues: Transcriptional repressor NrdR (155 aa).

A zinc finger lies at 3-34 (CPFCGHSNTQVLDTRMSEDGDAVRRRRRCEAC). An ATP-cone domain is found at 49-139 (PAIVKKNGSR…VYRSFEDVSE (91 aa)).

Belongs to the NrdR family. Zn(2+) serves as cofactor.

In terms of biological role, negatively regulates transcription of bacterial ribonucleotide reductase nrd genes and operons by binding to NrdR-boxes. The sequence is that of Transcriptional repressor NrdR from Cupriavidus necator (strain ATCC 17699 / DSM 428 / KCTC 22496 / NCIMB 10442 / H16 / Stanier 337) (Ralstonia eutropha).